Consider the following 117-residue polypeptide: DNA-binding protein VNG_2008H (117 aa).

Residues 1-59 (MSGNPDDDRLEELRQRKKEQLKQQQQGGDAEREAQQQQAQQAEQQKQAMLKQNLTDGAR) are disordered. The span at 11–21 (EELRQRKKEQL) shows a compositional bias: basic and acidic residues. Residues 35 to 48 (QQQQAQQAEQQKQA) are compositionally biased toward low complexity.

It belongs to the PDCD5 family.

The protein is DNA-binding protein VNG_2008H of Halobacterium salinarum (strain ATCC 700922 / JCM 11081 / NRC-1) (Halobacterium halobium).